Reading from the N-terminus, the 341-residue chain is Protein CbhE (341 aa).

Positions 287-297 (IDEENTSDSSE) are enriched in acidic residues. A disordered region spans residues 287–341 (IDEENTSDSSEEGTSKNRFRDTLFSNVPDSSSDSENEQEREKKELAGKTPSFRLC). Positions 323-332 (EQEREKKELA) are enriched in basic and acidic residues.

It localises to the cytoplasm. Functionally, may be involved in the pathogenesis of acute Q fever. This is Protein CbhE (cbhE) from Coxiella burnetii (strain RSA 493 / Nine Mile phase I).